The following is an 878-amino-acid chain: Phosphoenolpyruvate carboxylase (878 aa).

Residues His140 and Lys545 contribute to the active site.

It belongs to the PEPCase type 1 family. Mg(2+) serves as cofactor.

It carries out the reaction oxaloacetate + phosphate = phosphoenolpyruvate + hydrogencarbonate. Its function is as follows. Forms oxaloacetate, a four-carbon dicarboxylic acid source for the tricarboxylic acid cycle. This is Phosphoenolpyruvate carboxylase from Pseudomonas syringae pv. tomato (strain ATCC BAA-871 / DC3000).